We begin with the raw amino-acid sequence, 439 residues long: Trehalose-phosphatase (439 aa).

Mg(2+) is bound by residues aspartate 163 and aspartate 165. The active-site Proton donor/acceptor is aspartate 165. 282–284 (QRK) contributes to the substrate binding site. Aspartate 373 is a binding site for Mg(2+).

This sequence belongs to the gob-1 trehalose phosphatase family. Requires Mg(2+) as cofactor. Ubiquitously expressed. Strong expression in intestine.

It catalyses the reaction alpha,alpha-trehalose 6-phosphate + H2O = alpha,alpha-trehalose + phosphate. In terms of biological role, catalyzes the hydrolysis of trehalose 6-phosphate to trehalose and phosphate; prevents the accumulation of toxic levels of trehalose 6-phosphate. This is Trehalose-phosphatase from Caenorhabditis elegans.